The chain runs to 100 residues: MNLTPREKDKLLISLAAIVARGRLERGVKLNHPEAVALISDFVVEGAREGRSVADLMQAGAHVVRAENCMEGVPEMLHSVQVEATFPDGTKLVTVHHPIR.

This sequence belongs to the urease gamma subunit family. In terms of assembly, heterotrimer of UreA (gamma), UreB (beta) and UreC (alpha) subunits. Three heterotrimers associate to form the active enzyme.

It is found in the cytoplasm. The catalysed reaction is urea + 2 H2O + H(+) = hydrogencarbonate + 2 NH4(+). It functions in the pathway nitrogen metabolism; urea degradation; CO(2) and NH(3) from urea (urease route): step 1/1. This is Urease subunit gamma from Cereibacter sphaeroides (strain ATCC 17029 / ATH 2.4.9) (Rhodobacter sphaeroides).